A 400-amino-acid polypeptide reads, in one-letter code: MVIERIKHLASPLQDWVFTPSPKVMFDRQLIWIALGLMLTGLVMVASASFPISTRLTGQPFHFMMRHMLFVFLALSISSIVLRIELNKWLKYSSHLLLISLLLLAAVLVVGKSVNGAARWLPLGIFNLQPAEVAKLSLFVFIAGYLVRRHGEVRDSFRGFVKPLLVLITLAFFLLMQPDLGTTVVMFVTTIAMLFIAGAKLWQFIALVMGGISLVIVLILAEPYRMRRVTSFLDPWQDPFGSGYQLTQSLMAFGRGSWFGEGLGNSIQKLEYLPEAHTDFVFAVIAEELGFVGVCLVLCLIFALVFKALLIGRKCLAHDQRFGGFLAFGIGIWFAFQTLVNVGAAAGIVPTKGLTLPLISYGGSSLIIMSVAVSLLIRIDHECRVYLANEPPRSENEEQK.

The Cytoplasmic portion of the chain corresponds to 1 to 29 (MVIERIKHLASPLQDWVFTPSPKVMFDRQ). A helical transmembrane segment spans residues 30–50 (LIWIALGLMLTGLVMVASASF). The Periplasmic segment spans residues 51-60 (PISTRLTGQP). The helical transmembrane segment at 61 to 81 (FHFMMRHMLFVFLALSISSIV) threads the bilayer. Over 82 to 95 (LRIELNKWLKYSSH) the chain is Cytoplasmic. The helical transmembrane segment at 96–116 (LLLISLLLLAAVLVVGKSVNG) threads the bilayer. Over 117 to 122 (AARWLP) the chain is Periplasmic. A helical membrane pass occupies residues 123–143 (LGIFNLQPAEVAKLSLFVFIA). Residues 144-155 (GYLVRRHGEVRD) lie on the Cytoplasmic side of the membrane. Residues 156-176 (SFRGFVKPLLVLITLAFFLLM) form a helical membrane-spanning segment. Residues 177-178 (QP) lie on the Periplasmic side of the membrane. The helical transmembrane segment at 179-199 (DLGTTVVMFVTTIAMLFIAGA) threads the bilayer. Position 200 (Lys200) is a topological domain, cytoplasmic. The chain crosses the membrane as a helical span at residues 201-221 (LWQFIALVMGGISLVIVLILA). Topologically, residues 222 to 290 (EPYRMRRVTS…VFAVIAEELG (69 aa)) are periplasmic. The chain crosses the membrane as a helical span at residues 291 to 311 (FVGVCLVLCLIFALVFKALLI). The Cytoplasmic segment spans residues 312 to 321 (GRKCLAHDQR). Residues 322-342 (FGGFLAFGIGIWFAFQTLVNV) form a helical membrane-spanning segment. Topologically, residues 343 to 356 (GAAAGIVPTKGLTL) are periplasmic. A helical transmembrane segment spans residues 357-377 (PLISYGGSSLIIMSVAVSLLI). The Cytoplasmic portion of the chain corresponds to 378-400 (RIDHECRVYLANEPPRSENEEQK).

Belongs to the SEDS family. FtsW subfamily.

It is found in the cell inner membrane. It carries out the reaction [GlcNAc-(1-&gt;4)-Mur2Ac(oyl-L-Ala-gamma-D-Glu-L-Lys-D-Ala-D-Ala)](n)-di-trans,octa-cis-undecaprenyl diphosphate + beta-D-GlcNAc-(1-&gt;4)-Mur2Ac(oyl-L-Ala-gamma-D-Glu-L-Lys-D-Ala-D-Ala)-di-trans,octa-cis-undecaprenyl diphosphate = [GlcNAc-(1-&gt;4)-Mur2Ac(oyl-L-Ala-gamma-D-Glu-L-Lys-D-Ala-D-Ala)](n+1)-di-trans,octa-cis-undecaprenyl diphosphate + di-trans,octa-cis-undecaprenyl diphosphate + H(+). It functions in the pathway cell wall biogenesis; peptidoglycan biosynthesis. In terms of biological role, peptidoglycan polymerase that is essential for cell division. The polypeptide is Probable peptidoglycan glycosyltransferase FtsW (Aliivibrio salmonicida (strain LFI1238) (Vibrio salmonicida (strain LFI1238))).